The chain runs to 146 residues: MORN repeat-containing protein 4 (146 aa).

MORN repeat units lie at residues 16 to 38 (YRGE…DGGT), 39 to 61 (YLGH…DGSR), 62 to 84 (YEGE…DNMT), and 85 to 107 (FEGE…DGSH).

Interacts with MYO3A.

The protein localises to the cytoplasm. The protein resides in the cell projection. It localises to the filopodium tip. It is found in the stereocilium. Functionally, plays a role in promoting axonal degeneration following neuronal injury by toxic insult or trauma. The chain is MORN repeat-containing protein 4 (Morn4) from Rattus norvegicus (Rat).